We begin with the raw amino-acid sequence, 545 residues long: Probable acyl-activating enzyme 4 (545 aa).

This sequence belongs to the ATP-dependent AMP-binding enzyme family. In terms of tissue distribution, expressed in roots, leaves, stems, flowers and developing seeds.

Its function is as follows. May act as an acid--thiol ligase that activates carboxylic acids by forming acyl-CoAs. The chain is Probable acyl-activating enzyme 4 (AEE4) from Arabidopsis thaliana (Mouse-ear cress).